The sequence spans 131 residues: Large ribosomal subunit protein bL17 (131 aa).

It belongs to the bacterial ribosomal protein bL17 family. As to quaternary structure, part of the 50S ribosomal subunit. Contacts protein L32.

The sequence is that of Large ribosomal subunit protein bL17 from Shewanella baltica (strain OS223).